We begin with the raw amino-acid sequence, 272 residues long: ATP phosphoribosyltransferase regulatory subunit (272 aa).

The protein belongs to the class-II aminoacyl-tRNA synthetase family. HisZ subfamily. As to quaternary structure, heteromultimer composed of HisG and HisZ subunits.

It localises to the cytoplasm. It participates in amino-acid biosynthesis; L-histidine biosynthesis; L-histidine from 5-phospho-alpha-D-ribose 1-diphosphate: step 1/9. Functionally, required for the first step of histidine biosynthesis. May allow the feedback regulation of ATP phosphoribosyltransferase activity by histidine. In Staphylococcus aureus (strain USA300), this protein is ATP phosphoribosyltransferase regulatory subunit.